The following is a 107-amino-acid chain: Phosphoribosyl-ATP pyrophosphatase (107 aa).

The protein belongs to the PRA-PH family.

Its subcellular location is the cytoplasm. It carries out the reaction 1-(5-phospho-beta-D-ribosyl)-ATP + H2O = 1-(5-phospho-beta-D-ribosyl)-5'-AMP + diphosphate + H(+). It functions in the pathway amino-acid biosynthesis; L-histidine biosynthesis; L-histidine from 5-phospho-alpha-D-ribose 1-diphosphate: step 2/9. This Caulobacter vibrioides (strain ATCC 19089 / CIP 103742 / CB 15) (Caulobacter crescentus) protein is Phosphoribosyl-ATP pyrophosphatase (hisE).